Reading from the N-terminus, the 457-residue chain is Multidrug resistance protein MdtK (457 aa).

12 consecutive transmembrane segments (helical) span residues 11-31 (LLALAIPVVIAQLSQTAMGVV), 46-66 (AVAVGTSIWLPAILFGHGLLL), 93-113 (WLALCVSVLIMLVLYNSDHVI), 127-147 (AVGFLHAIMWGVPGYLFFQVL), 160-180 (GMVIGFVGLLVNIPINYIFIY), 188-208 (LGGVGCGVATASVYWVMFLMM), 243-263 (LPVALALFFEVTLFAVVALLV), 283-301 (LMFMLPMSLSVAATIRVGF), 316-336 (YTSMAVGLLLASVTAVFTIVF), 357-377 (LMLLAALYQLSDAVQVIGSGV), 387-407 (IFFITFTAYWLLGLPSGYLLG), and 418-438 (PAGFWIGFIIGLTAAAILMVL).

It belongs to the multi antimicrobial extrusion (MATE) (TC 2.A.66.1) family. MdtK subfamily.

Its subcellular location is the cell inner membrane. Multidrug efflux pump that functions probably as a Na(+)/drug antiporter. In Yersinia pseudotuberculosis serotype O:1b (strain IP 31758), this protein is Multidrug resistance protein MdtK.